Reading from the N-terminus, the 125-residue chain is Natriuretic peptide GNP1 (125 aa).

The N-terminal stretch at 1–25 (MDPRLVRAGSLVLLLALLVQDQGAA) is a signal peptide. Disordered stretches follow at residues 23 to 78 (GAAH…PAFK) and 105 to 125 (VSGM…TGKK). The propeptide occupies 26 to 85 (HPARAGQKYKPLIRRSEEDSQALGQEGDVAARAADEEEDAAGPGDALRQPAFKTLLASRE). Cysteines 94 and 110 form a disulfide.

The protein belongs to the natriuretic peptide family. In terms of tissue distribution, expressed by the venom gland.

The protein resides in the secreted. Exhibits natriuretic and vasodepressor activity. Acts by stimulating cGMP. The polypeptide is Natriuretic peptide GNP1 (Varanus varius (Lace monitor lizard)).